We begin with the raw amino-acid sequence, 323 residues long: Coiled-coil domain-containing protein 160 (323 aa).

Residues 143-290 (SKLRLNLLNE…IKNELRTEKS (148 aa)) adopt a coiled-coil conformation.

It belongs to the CCDC160 family.

The protein is Coiled-coil domain-containing protein 160 (CCDC160) of Bos taurus (Bovine).